The primary structure comprises 449 residues: Bifunctional protein GlmU (449 aa).

Residues 1-229 form a pyrophosphorylase region; sequence MNHFAVILAA…FEETIGVNDR (229 aa). UDP-N-acetyl-alpha-D-glucosamine is bound by residues 8–11, K22, Q72, and 77–78; these read LAAG and GT. Residue D102 participates in Mg(2+) binding. G139, E154, N169, and N227 together coordinate UDP-N-acetyl-alpha-D-glucosamine. N227 serves as a coordination point for Mg(2+). Residues 230–250 are linker; it reads VALAQAETSMRKRTNEHWMRQ. An N-acetyltransferase region spans residues 251 to 449; it reads GVTFIDPAST…ERQTTKPDYR (199 aa). The UDP-N-acetyl-alpha-D-glucosamine site is built by R332 and K350. The active-site Proton acceptor is H362. Residues Y365 and N376 each contribute to the UDP-N-acetyl-alpha-D-glucosamine site. Acetyl-CoA-binding positions include 385–386, A422, and R439; that span reads NY.

This sequence in the N-terminal section; belongs to the N-acetylglucosamine-1-phosphate uridyltransferase family. The protein in the C-terminal section; belongs to the transferase hexapeptide repeat family. Homotrimer. Mg(2+) is required as a cofactor.

It localises to the cytoplasm. The catalysed reaction is alpha-D-glucosamine 1-phosphate + acetyl-CoA = N-acetyl-alpha-D-glucosamine 1-phosphate + CoA + H(+). It carries out the reaction N-acetyl-alpha-D-glucosamine 1-phosphate + UTP + H(+) = UDP-N-acetyl-alpha-D-glucosamine + diphosphate. It participates in nucleotide-sugar biosynthesis; UDP-N-acetyl-alpha-D-glucosamine biosynthesis; N-acetyl-alpha-D-glucosamine 1-phosphate from alpha-D-glucosamine 6-phosphate (route II): step 2/2. Its pathway is nucleotide-sugar biosynthesis; UDP-N-acetyl-alpha-D-glucosamine biosynthesis; UDP-N-acetyl-alpha-D-glucosamine from N-acetyl-alpha-D-glucosamine 1-phosphate: step 1/1. It functions in the pathway bacterial outer membrane biogenesis; LPS lipid A biosynthesis. Functionally, catalyzes the last two sequential reactions in the de novo biosynthetic pathway for UDP-N-acetylglucosamine (UDP-GlcNAc). The C-terminal domain catalyzes the transfer of acetyl group from acetyl coenzyme A to glucosamine-1-phosphate (GlcN-1-P) to produce N-acetylglucosamine-1-phosphate (GlcNAc-1-P), which is converted into UDP-GlcNAc by the transfer of uridine 5-monophosphate (from uridine 5-triphosphate), a reaction catalyzed by the N-terminal domain. This chain is Bifunctional protein GlmU, found in Exiguobacterium sibiricum (strain DSM 17290 / CCUG 55495 / CIP 109462 / JCM 13490 / 255-15).